Consider the following 284-residue polypeptide: 4-diphosphocytidyl-2-C-methyl-D-erythritol kinase (284 aa).

Residue K14 is part of the active site. 98-108 is a binding site for ATP; the sequence is PMGGGIGGGSS. D140 is an active-site residue.

The protein belongs to the GHMP kinase family. IspE subfamily.

It carries out the reaction 4-CDP-2-C-methyl-D-erythritol + ATP = 4-CDP-2-C-methyl-D-erythritol 2-phosphate + ADP + H(+). The protein operates within isoprenoid biosynthesis; isopentenyl diphosphate biosynthesis via DXP pathway; isopentenyl diphosphate from 1-deoxy-D-xylulose 5-phosphate: step 3/6. In terms of biological role, catalyzes the phosphorylation of the position 2 hydroxy group of 4-diphosphocytidyl-2C-methyl-D-erythritol. The chain is 4-diphosphocytidyl-2-C-methyl-D-erythritol kinase from Shewanella woodyi (strain ATCC 51908 / MS32).